A 601-amino-acid chain; its full sequence is Aspartate--tRNA(Asp/Asn) ligase (601 aa).

Glutamate 187 provides a ligand contact to L-aspartate. The interval 211–214 is aspartate; that stretch reads QQFK. L-aspartate is bound by residues arginine 233 and histidine 461. 233–235 contributes to the ATP binding site; sequence RDE. Residue glutamate 495 coordinates ATP. An L-aspartate-binding site is contributed by arginine 502. 547-550 contacts ATP; it reads GLDR.

It belongs to the class-II aminoacyl-tRNA synthetase family. Type 1 subfamily. In terms of assembly, homodimer.

The protein resides in the cytoplasm. It carries out the reaction tRNA(Asx) + L-aspartate + ATP = L-aspartyl-tRNA(Asx) + AMP + diphosphate. Aspartyl-tRNA synthetase with relaxed tRNA specificity since it is able to aspartylate not only its cognate tRNA(Asp) but also tRNA(Asn). Reaction proceeds in two steps: L-aspartate is first activated by ATP to form Asp-AMP and then transferred to the acceptor end of tRNA(Asp/Asn). This is Aspartate--tRNA(Asp/Asn) ligase from Pelodictyon phaeoclathratiforme (strain DSM 5477 / BU-1).